The primary structure comprises 467 residues: Probable rhamnogalacturonase A (467 aa).

An N-terminal signal peptide occupies residues 1–19 (MHSLSLISLALLSPLLVNA). A disulfide bridge connects residues Cys-40 and Cys-66. The active-site Proton donor is Asp-217. Cys-219 and Cys-236 are joined by a disulfide. Residues Asn-237 and Asn-252 are each glycosylated (N-linked (GlcNAc...) asparagine). His-292 is an active-site residue. Asn-319 is a glycosylation site (N-linked (GlcNAc...) asparagine). Disulfide bonds link Cys-342–Cys-348 and Cys-370–Cys-379.

The protein belongs to the glycosyl hydrolase 28 family.

It localises to the secreted. The enzyme catalyses Endohydrolysis of alpha-D-GalA-(1-&gt;2)-alpha-L-Rha glycosidic bond in the rhamnogalacturonan I backbone with initial inversion of anomeric configuration releasing oligosaccharides with beta-D-GalA at the reducing end.. Pectinolytic enzymes consist of four classes of enzymes: pectine lyase, polygalacturonase, pectin methylesterase and rhamnogalacturonase. Hydrolyzes alpha-D-galacturonopyranosyl-(1,2)-alpha-L-rhamnopyranosyl linkages in the backbone of the hairy regions of pectins. The polypeptide is Probable rhamnogalacturonase A (rhgA) (Aspergillus oryzae (strain ATCC 42149 / RIB 40) (Yellow koji mold)).